Reading from the N-terminus, the 158-residue chain is Secreted frizzled-related protein 1 (158 aa).

Residues 1-34 form the FZ domain; it reads VRDSCEPVMQFFGFYWPEMLKCDKFPEGDVCIAM. An N-linked (GlcNAc...) asparagine glycan is attached at Asn-38. Disulfide bonds link Cys-51/Cys-121 and Cys-68/Cys-123. Residues 51–158 form the NTR domain; it reads CPPCDNELKS…IHKWDKKNKE (108 aa).

Belongs to the secreted frizzled-related protein (sFRP) family. As to quaternary structure, interacts with WNT4, WNT1, WNT2, WNT8, MYOC and FRZD6.

Its subcellular location is the secreted. In terms of biological role, soluble frizzled-related proteins (sFRPS) function as modulators of Wnt signaling through direct interaction with Wnts. They have a role in regulating cell growth and differentiation in specific cell types. SFRP1 decreases intracellular beta-catenin levels. Has antiproliferative effects on vascular cells, in vitro and in vivo, and can induce, in vivo, an angiogenic response. In vascular cell cycle, delays the G1 phase and entry into the S phase. In kidney development, inhibits tubule formation and bud growth in metanephroi. Inhibits WNT1/WNT4-mediated TCF-dependent transcription. In Rattus norvegicus (Rat), this protein is Secreted frizzled-related protein 1 (Sfrp1).